A 669-amino-acid chain; its full sequence is DNA ligase (669 aa).

Residues 31-35, 80-81, and E112 each bind NAD(+); these read DAEYD and SL. The N6-AMP-lysine intermediate role is filled by K114. Residues R135, E172, K289, and K313 each coordinate NAD(+). Zn(2+) contacts are provided by C407, C410, C425, and C431. One can recognise a BRCT domain in the interval 591 to 669; the sequence is SVPQPLADKV…EEQLIEILNN (79 aa).

Belongs to the NAD-dependent DNA ligase family. LigA subfamily. It depends on Mg(2+) as a cofactor. Requires Mn(2+) as cofactor.

The catalysed reaction is NAD(+) + (deoxyribonucleotide)n-3'-hydroxyl + 5'-phospho-(deoxyribonucleotide)m = (deoxyribonucleotide)n+m + AMP + beta-nicotinamide D-nucleotide.. Its function is as follows. DNA ligase that catalyzes the formation of phosphodiester linkages between 5'-phosphoryl and 3'-hydroxyl groups in double-stranded DNA using NAD as a coenzyme and as the energy source for the reaction. It is essential for DNA replication and repair of damaged DNA. In Aliivibrio salmonicida (strain LFI1238) (Vibrio salmonicida (strain LFI1238)), this protein is DNA ligase.